The chain runs to 469 residues: tRNA modification GTPase MnmE (469 aa).

The (6S)-5-formyl-5,6,7,8-tetrahydrofolate site is built by arginine 26, glutamate 88, and arginine 127. The 169-residue stretch at 222–390 folds into the TrmE-type G domain; it reads GLKVAIVGRP…LEDAILHLVQ (169 aa). Asparagine 232 contacts K(+). Residues 232–237, 251–257, 276–279, and 344–347 contribute to the GTP site; these read NVGKSS, TDLPGTT, DTAG, and NKAD. A Mg(2+)-binding site is contributed by serine 236. Residues threonine 251, leucine 253, and threonine 256 each coordinate K(+). Threonine 257 contributes to the Mg(2+) binding site. (6S)-5-formyl-5,6,7,8-tetrahydrofolate is bound at residue lysine 469.

It belongs to the TRAFAC class TrmE-Era-EngA-EngB-Septin-like GTPase superfamily. TrmE GTPase family. In terms of assembly, homodimer. Heterotetramer of two MnmE and two MnmG subunits. K(+) serves as cofactor.

The protein resides in the cytoplasm. Functionally, exhibits a very high intrinsic GTPase hydrolysis rate. Involved in the addition of a carboxymethylaminomethyl (cmnm) group at the wobble position (U34) of certain tRNAs, forming tRNA-cmnm(5)s(2)U34. The polypeptide is tRNA modification GTPase MnmE (Synechococcus elongatus).